The primary structure comprises 745 residues: Jacalin-related lectin 4 (745 aa).

Jacalin-type lectin domains lie at 2–148, 151–294, 307–448, 451–594, and 601–744; these read AQKL…YFAP, PTKF…YFSP, AEKL…YFVT, PTKF…YFSR, and AETL…YVMP.

Belongs to the jacalin lectin family.

In Arabidopsis thaliana (Mouse-ear cress), this protein is Jacalin-related lectin 4 (JAL4).